The chain runs to 85 residues: Large ribosomal subunit protein bL27 (85 aa).

The disordered stretch occupies residues 1 to 22 (MAKTKAGGSTRNGRDSKGRRLG).

It belongs to the bacterial ribosomal protein bL27 family.

The chain is Large ribosomal subunit protein bL27 from Mycoplasmopsis pulmonis (strain UAB CTIP) (Mycoplasma pulmonis).